A 67-amino-acid polypeptide reads, in one-letter code: MAGQEQQQPQSRESEFEDDAPATPPAPGEAQASAATQGVDDLLDEIDGVLESNAEEFVRAFVQKGGQ.

Low complexity predominate over residues 1 to 11 (MAGQEQQQPQS). Positions 1-47 (MAGQEQQQPQSRESEFEDDAPATPPAPGEAQASAATQGVDDLLDEID) are disordered. Residues 25-61 (PAPGEAQASAATQGVDDLLDEIDGVLESNAEEFVRAF) form an ARC ATPase binding region. Residue Q67 is modified to Deamidated glutamine. Q67 is covalently cross-linked (Isoglutamyl lysine isopeptide (Gln-Lys) (interchain with K-? in acceptor proteins)).

This sequence belongs to the prokaryotic ubiquitin-like protein family. Strongly interacts with the proteasome-associated ATPase ARC through a hydrophobic interface; the interacting region of Pup lies in its C-terminal half. There is one Pup binding site per ARC hexamer ring. In terms of processing, is modified by deamidation of its C-terminal glutamine to glutamate by the deamidase Dop, a prerequisite to the subsequent pupylation process.

Its pathway is protein degradation; proteasomal Pup-dependent pathway. Functionally, protein modifier that is covalently attached to lysine residues of substrate proteins, thereby targeting them for proteasomal degradation. The tagging system is termed pupylation. This is Prokaryotic ubiquitin-like protein Pup from Arthrobacter sp. (strain FB24).